Here is a 242-residue protein sequence, read N- to C-terminus: MSAHALPKADLTATSLIVSGGIIAAWLALHVHALWFLDAAAHPILAIANFLGLTWLSVGLFIIAHDAMHGSVVPGRPRANAAMGQLVLWLYAGFSWRKMIVKHMAHHRHAGTDDDPDFDHGGPVRWYARFIGTYFGWREGLLLPVIVTVYALILGDRWMYVVFWPLPSILASIQLFVFGTWLPHRPGHDAFPDRHNARSSRISDPVSLLTCFHFGGYHHEHHLHPTVPWWRLPSTRTKGDTA.

It catalyses the reaction all-trans-beta-carotene + 2 AH2 + 2 O2 = echinenone + 2 A + 3 H2O. The enzyme catalyses echinenone + 2 AH2 + 2 O2 = canthaxanthin + 2 A + 3 H2O. It participates in carotenoid biosynthesis; astaxanthin biosynthesis. Converts beta-carotene to canthaxanthin via echinenone. The protein is Beta-carotene ketolase (crtW) of Paracoccus sp. (strain N81106 / MBIC 01143) (Agrobacterium aurantiacum).